Reading from the N-terminus, the 272-residue chain is Endoplasmic reticulum resident protein 27 (272 aa).

The first 25 residues, 1-25, serve as a signal peptide directing secretion; the sequence is MKITRSRCLILSFVLVCGLVPEVTA. Residues 39 to 152 form the Thioredoxin domain; the sequence is EPIWLTDVPA…WVTEYSPMIA (114 aa). 2 N-linked (GlcNAc...) asparagine glycosylation sites follow: asparagine 91 and asparagine 100. Residues 230–233 are PDIA3-binding site; that stretch reads DKWD. The Prevents secretion from ER motif lies at 269–272; it reads KEEL.

This sequence belongs to the protein disulfide isomerase family. As to quaternary structure, interacts with PDIA3.

The protein resides in the endoplasmic reticulum lumen. In terms of biological role, specifically binds unfolded proteins and may recruit protein disulfide isomerase PDIA3 to unfolded substrates. Binds protein substrates via a hydrophobic pocket in the C-terminal domain. May play a role in the unfolded stress response. In Mus musculus (Mouse), this protein is Endoplasmic reticulum resident protein 27 (Erp27).